Consider the following 894-residue polypeptide: Leucine--tRNA ligase, mitochondrial (894 aa).

The transit peptide at 1 to 9 (MLPRPSSRF) directs the protein to the mitochondrion. Positions 56–66 (PYPSGVLHIGH) match the 'HIGH' region motif. Residues 646-650 (KMSKS) carry the 'KMSKS' region motif. An ATP-binding site is contributed by Lys649.

The protein belongs to the class-I aminoacyl-tRNA synthetase family.

The protein localises to the mitochondrion matrix. The enzyme catalyses tRNA(Leu) + L-leucine + ATP = L-leucyl-tRNA(Leu) + AMP + diphosphate. This chain is Leucine--tRNA ligase, mitochondrial (NAM2), found in Saccharomyces paradoxus (Yeast).